Consider the following 255-residue polypeptide: 5-oxoprolinase subunit A (255 aa).

The protein belongs to the LamB/PxpA family. As to quaternary structure, forms a complex composed of PxpA, PxpB and PxpC.

It carries out the reaction 5-oxo-L-proline + ATP + 2 H2O = L-glutamate + ADP + phosphate + H(+). Its function is as follows. Catalyzes the cleavage of 5-oxoproline to form L-glutamate coupled to the hydrolysis of ATP to ADP and inorganic phosphate. In Corynebacterium efficiens (strain DSM 44549 / YS-314 / AJ 12310 / JCM 11189 / NBRC 100395), this protein is 5-oxoprolinase subunit A.